The following is a 428-amino-acid chain: C4-dicarboxylate transport protein (428 aa).

Helical transmembrane passes span 8–28, 44–64, 76–96, 142–162, 184–204, 222–242, 289–309, 326–346, and 352–372; these read SLYF…HFYP, LIKM…IAGM, VALL…LVIV, IGAF…LFGF, VIFG…FGAM, LIVC…GSIA, VVGL…SIYL, IFHQ…AAGV, and IVLA…LALI.

Belongs to the dicarboxylate/amino acid:cation symporter (DAACS) (TC 2.A.23) family.

It localises to the cell inner membrane. Functionally, responsible for the transport of dicarboxylates such as succinate, fumarate, and malate from the periplasm across the membrane. The sequence is that of C4-dicarboxylate transport protein from Cronobacter sakazakii (strain ATCC BAA-894) (Enterobacter sakazakii).